The sequence spans 60 residues: Hemocyte defensin Cg-Defh1 (60 aa).

The N-terminal stretch at 1–17 is a signal peptide; it reads LFTLVVLLMVSADMAFA. The beta-D-GlcNAc-(1-&gt;4)-Mur2Ac(oyl-L-Ala-gamma-D-Glu-L-Lys-D-Ala-D-Ala)-di-trans,octa-cis-undecaprenyl diphosphate site is built by Phe19, Gly20, and Cys21. 4 cysteine pairs are disulfide-bonded: Cys21/Cys42, Cys28/Cys51, Cys32/Cys53, and Cys37/Cys56. The binds to membrane interface stretch occupies residues 22–25; it reads PRDQ. His31 lines the beta-D-GlcNAc-(1-&gt;4)-Mur2Ac(oyl-L-Ala-gamma-D-Glu-L-Lys-D-Ala-D-Ala)-di-trans,octa-cis-undecaprenyl diphosphate pocket. Positions 43–49 are binds to membrane interface; the sequence is DAVTLWL. A beta-D-GlcNAc-(1-&gt;4)-Mur2Ac(oyl-L-Ala-gamma-D-Glu-L-Lys-D-Ala-D-Ala)-di-trans,octa-cis-undecaprenyl diphosphate-binding site is contributed by Cys51.

This sequence belongs to the invertebrate defensin family. As to expression, expressed in hemocytes.

It localises to the secreted. The protein localises to the target cell membrane. Antibacterial peptide mostly active against Gram-positive bacteria. It acts by selectively inhibiting peptidoglycan biosynthesis through complex formation with the cell wall precursor lipid II (1:1 molar ratio) thus inhibiting cell wall synthesis. It does not disrupt cell membranes. Is noticeably less potent than Cg-Defh2 and Cg-Defm. Shows no or limited activities against Gram-negative bacteria. The sequence is that of Hemocyte defensin Cg-Defh1 from Magallana gigas (Pacific oyster).